We begin with the raw amino-acid sequence, 227 residues long: UPF0758 protein CPF_2399 (227 aa).

An MPN domain is found at 105–227 (KISKPSDVAK…FISLKEKDIL (123 aa)). Residues His176, His178, and Asp189 each coordinate Zn(2+). Positions 176 to 189 (HNHPSGDPTPSRDD) match the JAMM motif motif.

The protein belongs to the UPF0758 family.

The sequence is that of UPF0758 protein CPF_2399 from Clostridium perfringens (strain ATCC 13124 / DSM 756 / JCM 1290 / NCIMB 6125 / NCTC 8237 / Type A).